Reading from the N-terminus, the 296-residue chain is HVA22-like protein i (296 aa).

Residues 146 to 296 (STPRPQPPQK…LRKTRSEESR (151 aa)) form a disordered region. Residues 180–193 (VSLSSSSSSSSSEN) show a composition bias toward low complexity. Residues 223–233 (AGTTQIAQKSV) are compositionally biased toward polar residues. Residues 251–261 (QIEEVEGEAES) show a composition bias toward acidic residues. A compositionally biased stretch (basic and acidic residues) spans 270–281 (GPKETVMEETIR).

It belongs to the DP1 family.

This is HVA22-like protein i (HVA22I) from Arabidopsis thaliana (Mouse-ear cress).